A 133-amino-acid chain; its full sequence is Ubiquitin-like FUBI-ribosomal protein eS30 fusion protein (133 aa).

The disordered stretch occupies residues 84 to 110 (GKVRGQTPKVAKQEKKKKKTGRAKRRM). Residues 97–110 (EKKKKKTGRAKRRM) show a composition bias toward basic residues. Lys-125 bears the N6-succinyllysine mark.

The protein in the N-terminal section; belongs to the ubiquitin family. This sequence in the C-terminal section; belongs to the eukaryotic ribosomal protein eS30 family. In terms of assembly, component of the 40S subunit of the ribosome. Post-translationally, FUBI is cleaved from ribosomal protein S30 by the deubiquitinase USP36 before the assembly of ribosomal protein S30 into pre-40S ribosomal particles. FUBI removal from ribosomal protein S30 is a crucial event for the final maturation of pre-40S particles.

The protein localises to the nucleus. It localises to the cytoplasm. Functionally, may have pro-apoptotic activity. In terms of biological role, component of the 40S subunit of the ribosome. Contributes to the assembly and function of 40S ribosomal subunits. The polypeptide is Ubiquitin-like FUBI-ribosomal protein eS30 fusion protein (Fau) (Mus musculus (Mouse)).